We begin with the raw amino-acid sequence, 113 residues long: Nucleoid-associated protein Cthe_2143 (113 aa).

This sequence belongs to the YbaB/EbfC family. Homodimer.

The protein resides in the cytoplasm. The protein localises to the nucleoid. Its function is as follows. Binds to DNA and alters its conformation. May be involved in regulation of gene expression, nucleoid organization and DNA protection. In Acetivibrio thermocellus (strain ATCC 27405 / DSM 1237 / JCM 9322 / NBRC 103400 / NCIMB 10682 / NRRL B-4536 / VPI 7372) (Clostridium thermocellum), this protein is Nucleoid-associated protein Cthe_2143.